Reading from the N-terminus, the 97-residue chain is Gibberellin-regulated protein 5 (97 aa).

The N-terminal stretch at 1-27 (MANCIRRNALFFLTLLFLLSVSNLVQA) is a signal peptide.

Belongs to the GASA family. In terms of processing, six disulfide bonds may be present. As to expression, expressed in roots, root hairs, vasculature of cotyledons and hypocotyls, shoot apex, leaf veins, stems, flower receptacles, pollen, filaments, anthers and siliques.

It is found in the secreted. The protein localises to the cell wall. The protein resides in the extracellular space. Its subcellular location is the extracellular matrix. In terms of biological role, gibberellin-regulated protein that acts as a negative regulator of gibberellin-induced flowering and stem growth. May inhibit flowering and inflorescence growth via a pathway involving GAI and by enhancing FLC expression and repressing FT and LFY. Acts as a negative regulator in thermotolerance by resogulating both salicylic acid (SA) signaling and heat shock-protein accumulation. This is Gibberellin-regulated protein 5 (GASA5) from Arabidopsis thaliana (Mouse-ear cress).